The chain runs to 34 residues: Photosystem II reaction center protein M (34 aa).

A helical transmembrane segment spans residues 5 to 25 (ILAFIATALFILVPTAFLLII).

Belongs to the PsbM family. PSII is composed of 1 copy each of membrane proteins PsbA, PsbB, PsbC, PsbD, PsbE, PsbF, PsbH, PsbI, PsbJ, PsbK, PsbL, PsbM, PsbT, PsbX, PsbY, PsbZ, Psb30/Ycf12, at least 3 peripheral proteins of the oxygen-evolving complex and a large number of cofactors. It forms dimeric complexes.

Its subcellular location is the plastid. It is found in the chloroplast thylakoid membrane. In terms of biological role, one of the components of the core complex of photosystem II (PSII). PSII is a light-driven water:plastoquinone oxidoreductase that uses light energy to abstract electrons from H(2)O, generating O(2) and a proton gradient subsequently used for ATP formation. It consists of a core antenna complex that captures photons, and an electron transfer chain that converts photonic excitation into a charge separation. This subunit is found at the monomer-monomer interface. The chain is Photosystem II reaction center protein M from Coffea arabica (Arabian coffee).